A 92-amino-acid chain; its full sequence is RNA-binding protein Hfq (92 aa).

The region spanning D9–F68 is the Sm domain.

Belongs to the Hfq family. Homohexamer.

RNA chaperone that binds small regulatory RNA (sRNAs) and mRNAs to facilitate mRNA translational regulation in response to envelope stress, environmental stress and changes in metabolite concentrations. Also binds with high specificity to tRNAs. The protein is RNA-binding protein Hfq of Shewanella piezotolerans (strain WP3 / JCM 13877).